We begin with the raw amino-acid sequence, 202 residues long: Putative transmembrane protein ORF202 (202 aa).

5 consecutive transmembrane segments (helical) span residues 13–33 (AIAF…FHYI), 40–60 (VFYL…LFLG), 87–107 (YYPV…ISVF), 156–176 (YGAL…HSLS), and 177–197 (LTAF…DLWA).

It localises to the host membrane. The sequence is that of Putative transmembrane protein ORF202 from Acidianus filamentous virus 2 (isolate Italy/Pozzuoli) (AFV-2).